Reading from the N-terminus, the 663-residue chain is ATP-dependent RNA helicase DBP6 (663 aa).

Disordered regions lie at residues 1 to 119 (MFGV…DAME) and 153 to 200 (VHSS…LNSS). Acidic residues-rich tracts occupy residues 39–79 (VVDD…NSEG) and 88–101 (SESESESESESESD). Composition is skewed to basic and acidic residues over residues 102–111 (VDGKHMKEEL) and 168–177 (GSREKEKEEV). A Q motif motif is present at residues 222 to 250 (KPFSEFPLSPFMHENLESLGFENAFAVQV). The 185-residue stretch at 264 to 448 (KLRPDAFGDV…SLDFHNPRLL (185 aa)) folds into the Helicase ATP-binding domain. 277-284 (ASTGSGKT) provides a ligand contact to ATP. Positions 384 to 387 (DEAD) match the DEAD box motif. One can recognise a Helicase C-terminal domain in the interval 485-642 (ILAKFLIAQE…DVEVNLKQLI (158 aa)).

This sequence belongs to the DEAD box helicase family. DDX51/DBP6 subfamily. As to quaternary structure, associated with pre-ribosomal particles.

The protein localises to the nucleus. It localises to the nucleolus. The enzyme catalyses ATP + H2O = ADP + phosphate + H(+). In terms of biological role, ATP-binding RNA helicase involved in the biogenesis of 60S ribosomal subunits and is required for the normal formation of 25S and 5.8S rRNAs. The polypeptide is ATP-dependent RNA helicase DBP6 (DBP6) (Lodderomyces elongisporus (strain ATCC 11503 / CBS 2605 / JCM 1781 / NBRC 1676 / NRRL YB-4239) (Yeast)).